Here is a 212-residue protein sequence, read N- to C-terminus: Large ribosomal subunit protein uL3 (212 aa).

Residues 135-155 (ATHGNSVSHRAHGSTGQNQSP) show a composition bias toward polar residues. A disordered region spans residues 135 to 162 (ATHGNSVSHRAHGSTGQNQSPGKVFKGK). Gln153 is subject to N5-methylglutamine.

Belongs to the universal ribosomal protein uL3 family. As to quaternary structure, part of the 50S ribosomal subunit. Forms a cluster with proteins L14 and L19. Methylated by PrmB.

Its function is as follows. One of the primary rRNA binding proteins, it binds directly near the 3'-end of the 23S rRNA, where it nucleates assembly of the 50S subunit. In Psychrobacter arcticus (strain DSM 17307 / VKM B-2377 / 273-4), this protein is Large ribosomal subunit protein uL3.